The sequence spans 97 residues: Citrate lyase acyl carrier protein (97 aa).

An O-(phosphoribosyl dephospho-coenzyme A)serine modification is found at Ser-14.

The protein belongs to the CitD family. As to quaternary structure, oligomer with a subunit composition of (alpha,beta,gamma)6.

The protein localises to the cytoplasm. In terms of biological role, covalent carrier of the coenzyme of citrate lyase. The protein is Citrate lyase acyl carrier protein of Leuconostoc citreum (strain KM20).